The chain runs to 190 residues: Dynactin subunit 6 (190 aa).

T186 is modified (phosphothreonine).

This sequence belongs to the dynactin subunits 5/6 family. Dynactin subunit 6 subfamily. Subunit of dynactin, a multiprotein complex part of a tripartite complex with dynein and a adapter, such as BICDL1, BICD2 or HOOK3. The dynactin complex is built around ACTR1A/ACTB filament and consists of an actin-related filament composed of a shoulder domain, a pointed end and a barbed end. Its length is defined by its flexible shoulder domain. The soulder is composed of 2 DCTN1 subunits, 4 DCTN2 and 2 DCTN3. The 4 DCNT2 (via N-terminus) bind the ACTR1A filament and act as molecular rulers to determine the length. The pointed end is important for binding dynein-dynactin cargo adapters. Consists of 4 subunits: ACTR10, DCNT4, DCTN5 and DCTN6. Within the complex DCTN6 forms a heterodimer with DCTN5. The barbed end is composed of a CAPZA1:CAPZB heterodimers, which binds ACTR1A/ACTB filament and dynactin and stabilizes dynactin. Interacts with PLK1. Interacts with N4BP2L1. Post-translationally, phosphorylation at Thr-186 by CDK1 during mitotic prometaphase creates a binding site for PLK1 that facilitates its recruitment to kinetochores.

The protein localises to the cytoplasm. It is found in the cytoskeleton. The protein resides in the chromosome. Its subcellular location is the centromere. It localises to the kinetochore. Its function is as follows. Part of the dynactin complex that activates the molecular motor dynein for ultra-processive transport along microtubules. This Sus scrofa (Pig) protein is Dynactin subunit 6 (DCTN6).